Consider the following 41-residue polypeptide: Plantazolicin (41 aa).

Positions 1 to 27 are excised as a propeptide; the sequence is MTKITIPTALSAKVHGEGQHLFEPMAA. Arg-28 is subject to N2,N2-dimethylarginine; in form plantazolicin A. The thiazole-4-carboxylic acid (Arg-Cys) cross-link spans 28-29; the sequence is RC. 2 cross-links (5-methyloxazole-4-carboxylic acid (Cys-Thr)) span residues 29–30 and 31–32; these read CT. Residues 30–31 constitute a cross-link (thiazole-4-carboxylic acid (Thr-Cys)); sequence TC. Positions 32–33 form a cross-link, 5-methyloxazole-4-carboxylic acid (Thr-Thr); that stretch reads TT. A cross-link (oxazole-4-carboxylic acid (Ile-Ser)) is located at residues 35–36; it reads IS. 3 consecutive cross-links (oxazole-4-carboxylic acid (Ser-Ser)) follow at residues 36–37, 37–38, and 38–39; these read SS. A cross-link (5-methyloxazoline-4-carboxylic acid (Ser-Thr)) is located at residues 39 to 40; the sequence is ST.

Post-translationally, maturation of thiazole and oxazole containing antibiotics involves the enzymatic condensation of a Cys, Ser or Thr with the alpha-carbonyl of the preceding amino acid to form a thioether or ether bond, then dehydration to form a double bond with the alpha-amino nitrogen. Thiazoline or oxazoline ring are dehydrogenated to form thiazole or oxazole rings.

The protein resides in the secreted. The protein localises to the cell wall. Functionally, peptide antibiotic inhibiting growth of Gram-positive bacteria. The mode of action appears to be disruption of cell walls and lysis of cells. The protein is Plantazolicin of Bacillus pumilus (strain ATCC 7061 / DSM 27 / CCUG 26015 / JCM 2508 / NBRC 12092 / NCIMB 9369 / NCTC 10337 / NRRL NRS-272 / CCM 2144).